A 215-amino-acid polypeptide reads, in one-letter code: 3-isopropylmalate dehydratase small subunit (215 aa).

The protein belongs to the LeuD family. LeuD type 1 subfamily. In terms of assembly, heterodimer of LeuC and LeuD.

It carries out the reaction (2R,3S)-3-isopropylmalate = (2S)-2-isopropylmalate. It participates in amino-acid biosynthesis; L-leucine biosynthesis; L-leucine from 3-methyl-2-oxobutanoate: step 2/4. Functionally, catalyzes the isomerization between 2-isopropylmalate and 3-isopropylmalate, via the formation of 2-isopropylmaleate. The polypeptide is 3-isopropylmalate dehydratase small subunit (Cellvibrio japonicus (strain Ueda107) (Pseudomonas fluorescens subsp. cellulosa)).